Here is a 307-residue protein sequence, read N- to C-terminus: Dihydroorotate dehydrogenase A (fumarate) (307 aa).

FMN contacts are provided by residues S21 and 46 to 47 (KT). Substrate is bound by residues K46, 70 to 74 (NSVGL), and N130. An FMN-binding site is contributed by N130. The active-site Nucleophile is C133. FMN is bound by residues K168 and I194. A substrate-binding site is contributed by 195-196 (NT). Residues G220, 246–247 (GG), and 268–269 (GS) each bind FMN.

The protein belongs to the dihydroorotate dehydrogenase family. Type 1 subfamily. Homodimer. FMN serves as cofactor.

The protein resides in the cytoplasm. It carries out the reaction (S)-dihydroorotate + fumarate = orotate + succinate. Its pathway is pyrimidine metabolism; UMP biosynthesis via de novo pathway. Catalyzes the conversion of dihydroorotate to orotate with fumarate as the electron acceptor. The protein is Dihydroorotate dehydrogenase A (fumarate) (pyrD) of Lactobacillus helveticus (strain DPC 4571).